The sequence spans 866 residues: Retinoblastoma-related protein 2 (866 aa).

Positions 274–475 are domain A; it reads TPITSAMTTA…EKGSSLYNSL (202 aa). A pocket region spans residues 274–721; the sequence is TPITSAMTTA…NEVFVPAAKP (448 aa). The segment at 476-593 is spacer; sequence IVARPSVASE…PVGGNEKCAD (118 aa). The tract at residues 513–551 is disordered; that stretch reads LPATPSKKRAAGRDDNADPRSPKRPCNESRSPVVEHNLQ. Residues 523–539 show a composition bias toward basic and acidic residues; that stretch reads AGRDDNADPRSPKRPCN. Residues 594-721 form a domain B region; sequence VTIQIFFSKI…NEVFVPAAKP (128 aa). Disordered regions lie at residues 731-754 and 839-866; these read TRPEDKKNASGQVPGSPKLSPFPN and SLGQPNGGSTSLDPAAAFSPLSKRKPDT. Positions 841-850 are enriched in polar residues; sequence GQPNGGSTSL.

The protein belongs to the retinoblastoma protein (RB) family. In terms of tissue distribution, ubiquitous.

The protein resides in the nucleus. Regulator of biological processes that recruits a histone deacetylase to control gene transcription. May play a role in the entry into mitosis, negatively regulating the cell proliferation. Formation of stable complexes with geminiviridae replication-associated proteins may create a cellular environment which favors viral DNA replication. This Zea mays (Maize) protein is Retinoblastoma-related protein 2 (RBR2).